The sequence spans 333 residues: B3 domain-containing protein At1g32030 (333 aa).

Polar residues-rich tracts occupy residues 76–99 (VTVRNPEQNQQNLHRVSTSSSLLD) and 134–143 (PQNASSSSTL). Residues 76–179 (VTVRNPEQNQ…SEPKKAKTPY (104 aa)) form a disordered region. A DNA-binding region (TF-B3) is located at residues 220–328 (QSRLLMPFNT…ILSFALVLPP (109 aa)).

The protein localises to the nucleus. This Arabidopsis thaliana (Mouse-ear cress) protein is B3 domain-containing protein At1g32030.